The primary structure comprises 87 residues: Putative defensin-like protein 238 (87 aa).

Residues 1–23 (MRSITWFIVFCVFMFIALNHVKG) form the signal peptide. 4 disulfide bridges follow: C30/C87, C40/C65, C48/C78, and C63/C80.

The protein belongs to the DEFL family.

It localises to the secreted. This chain is Putative defensin-like protein 238 (SCRL16), found in Arabidopsis thaliana (Mouse-ear cress).